Reading from the N-terminus, the 92-residue chain is Small ribosomal subunit protein uS19 (92 aa).

Belongs to the universal ribosomal protein uS19 family.

Protein S19 forms a complex with S13 that binds strongly to the 16S ribosomal RNA. In Rickettsia felis (strain ATCC VR-1525 / URRWXCal2) (Rickettsia azadi), this protein is Small ribosomal subunit protein uS19.